The following is a 193-amino-acid chain: Orotate phosphoribosyltransferase (193 aa).

Residues arginine 102, lysine 103, lysine 106, histidine 108, and 129-137 (EDVVTTGGS) each bind 5-phospho-alpha-D-ribose 1-diphosphate. Residues threonine 133 and arginine 161 each contribute to the orotate site.

Belongs to the purine/pyrimidine phosphoribosyltransferase family. PyrE subfamily. Homodimer. Mg(2+) is required as a cofactor.

It catalyses the reaction orotidine 5'-phosphate + diphosphate = orotate + 5-phospho-alpha-D-ribose 1-diphosphate. It functions in the pathway pyrimidine metabolism; UMP biosynthesis via de novo pathway; UMP from orotate: step 1/2. Functionally, catalyzes the transfer of a ribosyl phosphate group from 5-phosphoribose 1-diphosphate to orotate, leading to the formation of orotidine monophosphate (OMP). The sequence is that of Orotate phosphoribosyltransferase from Prochlorococcus marinus (strain NATL1A).